A 279-amino-acid chain; its full sequence is Acyl-[acyl-carrier-protein]--UDP-N-acetylglucosamine O-acyltransferase (279 aa).

The protein belongs to the transferase hexapeptide repeat family. LpxA subfamily. As to quaternary structure, homotrimer.

The protein resides in the cytoplasm. The enzyme catalyses a (3R)-hydroxyacyl-[ACP] + UDP-N-acetyl-alpha-D-glucosamine = a UDP-3-O-[(3R)-3-hydroxyacyl]-N-acetyl-alpha-D-glucosamine + holo-[ACP]. It functions in the pathway glycolipid biosynthesis; lipid IV(A) biosynthesis; lipid IV(A) from (3R)-3-hydroxytetradecanoyl-[acyl-carrier-protein] and UDP-N-acetyl-alpha-D-glucosamine: step 1/6. Its function is as follows. Involved in the biosynthesis of lipid A, a phosphorylated glycolipid that anchors the lipopolysaccharide to the outer membrane of the cell. The sequence is that of Acyl-[acyl-carrier-protein]--UDP-N-acetylglucosamine O-acyltransferase from Chlamydia pneumoniae (Chlamydophila pneumoniae).